The following is a 103-amino-acid chain: Potassium voltage-gated channel subfamily E member 3 (103 aa).

N-linked (GlcNAc...) asparagine glycans are attached at residues N5, N22, and N41. The tract at residues 30–52 is disordered; the sequence is LCRPGPGPGPDNQTEDRRASLPG. Residues 57 to 77 traverse the membrane as a helical segment; the sequence is SYMYILFVMFLFAVTVGSLIL. The interaction with KCNQ1 stretch occupies residues 68 to 79; the sequence is FAVTVGSLILGY. Residues 78–103 lie on the Cytoplasmic side of the membrane; sequence GYTRSRKVDKRSDPYHVYIKNRVSMI.

Belongs to the potassium channel KCNE family. Interacts with KCNB1. Interacts with KCNC2. Associates with KCNC4/Kv3.4. Interacts with KCNQ1; associates with a KCNQ1:KCNE3 stoichiometry of 4:4; produces a current with nearly instantaneous activation with a linear current-voltage relationship and alters membrane raft localization; affects KCNQ1 structure and gating properties.

The protein localises to the cell membrane. It is found in the cytoplasm. It localises to the perikaryon. The protein resides in the cell projection. Its subcellular location is the dendrite. The protein localises to the membrane raft. In terms of biological role, ancillary protein that functions as a regulatory subunit of the voltage-gated potassium (Kv) channel complex composed of pore-forming and potassium-conducting alpha subunits and of regulatory beta subunits. KCNE3 beta subunit modulates the gating kinetics and enhances stability of the channel complex. Alters the gating of the delayed rectifier Kv channel containing KCNB1 alpha subunit. Associates with KCNC4/Kv3.4 alpha subunit to form the subthreshold Kv channel in skeletal muscle and to establish the resting membrane potential (RMP) in muscle cells. Association with KCNQ1/KCLQT1 alpha subunit may form the intestinal cAMP-stimulated potassium channel involved in chloride secretion that produces a current with nearly instantaneous activation with a linear current-voltage relationship. This chain is Potassium voltage-gated channel subfamily E member 3, found in Mus musculus (Mouse).